The sequence spans 231 residues: 7-cyano-7-deazaguanine synthase (231 aa).

8 to 18 (FSGGQDSTTCL) provides a ligand contact to ATP. Residues Cys188, Cys197, Cys200, and Cys203 each contribute to the Zn(2+) site.

The protein belongs to the QueC family. The cofactor is Zn(2+).

The catalysed reaction is 7-carboxy-7-deazaguanine + NH4(+) + ATP = 7-cyano-7-deazaguanine + ADP + phosphate + H2O + H(+). The protein operates within purine metabolism; 7-cyano-7-deazaguanine biosynthesis. In terms of biological role, catalyzes the ATP-dependent conversion of 7-carboxy-7-deazaguanine (CDG) to 7-cyano-7-deazaguanine (preQ(0)). The chain is 7-cyano-7-deazaguanine synthase from Escherichia coli O157:H7.